Consider the following 235-residue polypeptide: MEKIYTWLKTNSYIVHHVSTSLNIISFIIVLIWIFESTIKEKLNIIFTVNLEAIVVFISILIVGLNQLLQKLLIEAEYSPAFALAVGYFKNFIFPAITQIKENGEVNPKICIYKPKHFDELTSTNIDMIKAELTNKKYNLSEINLSLKGARARDILTLNKKSKIHSYFDFPNTLLSLYSYVDFKIASSNNNSSELKKKKFVELLIEQFYLKLNELIQENNLTNNITFCDKNLQGL.

The next 2 helical transmembrane spans lie at Ile14–Ile34 and Ile45–Leu65.

It in the C-terminal section; belongs to the bacterial STING family. In terms of assembly, homodimer.

Its subcellular location is the cell inner membrane. Its function is as follows. Effector protein of a CBASS antivirus system. CBASS (cyclic oligonucleotide-based antiphage signaling system) provides immunity against bacteriophage. The CD-NTase protein synthesizes cyclic nucleotides in response to infection; these serve as specific second messenger signals. The signals activate a diverse range of effectors, leading to bacterial cell death and thus abortive phage infection. A type I-D(GG) CBASS system. In terms of biological role, binds cyclic dinucleotides: binds c-di-GMP (synthesized by the cognate CdnE encoded upstream in the same operon), cyclic 3'3'-cyclic GMP-AMP (3'3'-cGAMP) but not cUMP-AMP. The effector protein for this CBASS system, its activity is stimulated by c-di-GMP and leads to cell death. The protein is CD-NTase-associated protein 13 of Flavobacteriaceae sp. genome_bin_11.